A 67-amino-acid polypeptide reads, in one-letter code: LPS-assembly lipoprotein LptM (67 aa).

A signal peptide spans M1–G19. C20 is lipidated: N-palmitoyl cysteine. C20 carries S-diacylglycerol cysteine lipidation. A disordered region spans residues L26–Y67. A compositionally biased stretch (polar residues) spans V42–P51.

This sequence belongs to the LptM family. Interacts with the outer membrane embedded portion of the LPS translocon formed by LptD and LptE (LptDE).

It is found in the cell outer membrane. Component of the lipopolysaccharide (LPS) transport (Lpt) pathway that promotes efficient assembly of the outer membrane LPS translocon (LptDE) by the BAM complex. Facilitates oxidative maturation of LptD by stabilizing a conformation of the LPS translocon in which LptD can efficiently acquire native disulfide bonds, thereby activating the LPS translocon. This Escherichia coli O157:H7 protein is LPS-assembly lipoprotein LptM.